Reading from the N-terminus, the 1203-residue chain is Chromosome partition protein Smc (1203 aa).

32-39 (PNGSGKSN) provides a ligand contact to ATP. Coiled-coil stretches lie at residues 167-203 (ILKY…RQLK), 250-288 (MMRR…SVQQ), and 327-497 (DVLE…LERK). Positions 511–622 (GLLGSIAKLV…VVNYLAEALG (112 aa)) constitute an SMC hinge domain. 3 coiled-coil regions span residues 657–689 (EVTS…ALSE), 720–765 (RLGQ…NVEQ), and 976–1030 (YDRA…RKDL).

It belongs to the SMC family. As to quaternary structure, homodimer.

The protein localises to the cytoplasm. Functionally, required for chromosome condensation and partitioning. The chain is Chromosome partition protein Smc from Mycobacterium leprae (strain TN).